The sequence spans 122 residues: Large ribosomal subunit protein uL14 (122 aa).

This sequence belongs to the universal ribosomal protein uL14 family. In terms of assembly, part of the 50S ribosomal subunit. Forms a cluster with proteins L3 and L19. In the 70S ribosome, L14 and L19 interact and together make contacts with the 16S rRNA in bridges B5 and B8.

Functionally, binds to 23S rRNA. Forms part of two intersubunit bridges in the 70S ribosome. This is Large ribosomal subunit protein uL14 from Chlorobium phaeobacteroides (strain DSM 266 / SMG 266 / 2430).